A 372-amino-acid chain; its full sequence is Tribbles homolog 1 (372 aa).

Disordered stretches follow at residues 1–23 and 52–86; these read MRVG…ALLF and ECSS…GSAP. Positions 59–75 are enriched in pro residues; it reads YLSPPGSPCSPQPPPAA. One can recognise a Protein kinase domain in the interval 91–338; that stretch reads IADYLLLPLA…APEILLHPWF (248 aa). The COP1-binding motif lies at 355–360; that stretch reads DQIVPE.

It belongs to the protein kinase superfamily. CAMK Ser/Thr protein kinase family. Tribbles subfamily. As to quaternary structure, monomer. Interacts (via protein kinase domain) with CEBPA. Interacts with COP1. As to expression, expressed in most human tissues with the highest levels in skeletal muscle, thyroid gland, pancreas, peripheral blood leukocytes, and bone marrow.

In terms of biological role, adapter protein involved in protein degradation by interacting with COP1 ubiquitin ligase. The COP1-binding motif is masked by autoinhibitory interactions with the protein kinase domain. Serves to alter COP1 substrate specificity by directing the activity of COP1 toward CEBPA. Binds selectively the recognition sequence of CEBPA. Regulates myeloid cell differentiation by altering the expression of CEBPA in a COP1-dependent manner. Controls macrophage, eosinophil and neutrophil differentiation via the COP1-binding domain. Interacts with MAPK kinases and regulates activation of MAP kinases, but has no kinase activity. This Homo sapiens (Human) protein is Tribbles homolog 1.